The sequence spans 198 residues: Carnitine operon protein CaiE (198 aa).

The tract at residues 179–198 (VEENRPRLKGTTDVKPKSAQ) is disordered. The span at 180-198 (EENRPRLKGTTDVKPKSAQ) shows a compositional bias: basic and acidic residues.

It belongs to the transferase hexapeptide repeat family.

The protein operates within amine and polyamine metabolism; carnitine metabolism. Overproduction of CaiE stimulates the activity of CaiB and CaiD. This chain is Carnitine operon protein CaiE, found in Salmonella typhi.